The chain runs to 442 residues: Chromosomal replication initiator protein DnaA (442 aa).

Residues 1–75 (MDAWPRCLER…GNGEVALAVG (75 aa)) form a domain I, interacts with DnaA modulators region. Positions 75–104 (GSRPRAPEPAPAPVAATIAPQAAPIAPFAG) are domain II. Positions 105 to 322 (NLDSHYTFAN…GALNTLVARA (218 aa)) are domain III, AAA+ region. 4 residues coordinate ATP: G150, G152, K153, and T154. The domain IV, binds dsDNA stretch occupies residues 323-442 (NFTGRSITVE…WEKLIRKLSE (120 aa)).

The protein belongs to the DnaA family. Oligomerizes as a right-handed, spiral filament on DNA at oriC.

It localises to the cytoplasm. In terms of biological role, plays an essential role in the initiation and regulation of chromosomal replication. ATP-DnaA binds to the origin of replication (oriC) to initiate formation of the DNA replication initiation complex once per cell cycle. Binds the DnaA box (a 9 base pair repeat at the origin) and separates the double-stranded (ds)DNA. Forms a right-handed helical filament on oriC DNA; dsDNA binds to the exterior of the filament while single-stranded (ss)DNA is stabiized in the filament's interior. The ATP-DnaA-oriC complex binds and stabilizes one strand of the AT-rich DNA unwinding element (DUE), permitting loading of DNA polymerase. After initiation quickly degrades to an ADP-DnaA complex that is not apt for DNA replication. Binds acidic phospholipids. The protein is Chromosomal replication initiator protein DnaA of Xanthomonas oryzae pv. oryzae (strain PXO99A).